Consider the following 567-residue polypeptide: Urease subunit alpha (567 aa).

Positions 128-567 (GGIDPHIHFI…LPLAQLYHLF (440 aa)) constitute a Urease domain. H133, H135, and K216 together coordinate Ni(2+). Position 216 is an N6-carboxylysine (K216). A substrate-binding site is contributed by H218. The Ni(2+) site is built by H245 and H271. Residue H319 is the Proton donor of the active site. D359 is a binding site for Ni(2+).

It belongs to the metallo-dependent hydrolases superfamily. Urease alpha subunit family. In terms of assembly, heterotrimer of UreA (gamma), UreB (beta) and UreC (alpha) subunits. Three heterotrimers associate to form the active enzyme. The cofactor is Ni cation. Post-translationally, carboxylation allows a single lysine to coordinate two nickel ions.

It localises to the cytoplasm. It carries out the reaction urea + 2 H2O + H(+) = hydrogencarbonate + 2 NH4(+). It participates in nitrogen metabolism; urea degradation; CO(2) and NH(3) from urea (urease route): step 1/1. The protein is Urease subunit alpha of Marinobacter nauticus (strain ATCC 700491 / DSM 11845 / VT8) (Marinobacter aquaeolei).